The following is a 205-amino-acid chain: Recombination protein RecR (205 aa).

A C4-type zinc finger spans residues 64 to 79 (CSRCYFITQGDLCAIC). One can recognise a Toprim domain in the interval 87 to 182 (RVICVVEEPL…RVTRLARGLP (96 aa)).

Belongs to the RecR family.

In terms of biological role, may play a role in DNA repair. It seems to be involved in an RecBC-independent recombinational process of DNA repair. It may act with RecF and RecO. This chain is Recombination protein RecR, found in Roseiflexus sp. (strain RS-1).